A 406-amino-acid chain; its full sequence is Arginine biosynthesis bifunctional protein ArgJ (406 aa).

Substrate-binding residues include Thr152, Lys179, Thr190, Glu277, Asn401, and Ser406. Residue Thr190 is the Nucleophile of the active site.

It belongs to the ArgJ family. Heterotetramer of two alpha and two beta chains.

The protein localises to the cytoplasm. The enzyme catalyses N(2)-acetyl-L-ornithine + L-glutamate = N-acetyl-L-glutamate + L-ornithine. It catalyses the reaction L-glutamate + acetyl-CoA = N-acetyl-L-glutamate + CoA + H(+). It participates in amino-acid biosynthesis; L-arginine biosynthesis; L-ornithine and N-acetyl-L-glutamate from L-glutamate and N(2)-acetyl-L-ornithine (cyclic): step 1/1. Its pathway is amino-acid biosynthesis; L-arginine biosynthesis; N(2)-acetyl-L-ornithine from L-glutamate: step 1/4. Catalyzes two activities which are involved in the cyclic version of arginine biosynthesis: the synthesis of N-acetylglutamate from glutamate and acetyl-CoA as the acetyl donor, and of ornithine by transacetylation between N(2)-acetylornithine and glutamate. This chain is Arginine biosynthesis bifunctional protein ArgJ, found in Neisseria gonorrhoeae (strain ATCC 700825 / FA 1090).